We begin with the raw amino-acid sequence, 317 residues long: Acetyl-coenzyme A carboxylase carboxyl transferase subunit alpha (317 aa).

The CoA carboxyltransferase C-terminal domain occupies 40–293 (LEVRVREAIV…GDVIANALGE (254 aa)).

The protein belongs to the AccA family. Acetyl-CoA carboxylase is a heterohexamer composed of biotin carboxyl carrier protein (AccB), biotin carboxylase (AccC) and two subunits each of ACCase subunit alpha (AccA) and ACCase subunit beta (AccD).

Its subcellular location is the cytoplasm. It catalyses the reaction N(6)-carboxybiotinyl-L-lysyl-[protein] + acetyl-CoA = N(6)-biotinyl-L-lysyl-[protein] + malonyl-CoA. Its pathway is lipid metabolism; malonyl-CoA biosynthesis; malonyl-CoA from acetyl-CoA: step 1/1. Its function is as follows. Component of the acetyl coenzyme A carboxylase (ACC) complex. First, biotin carboxylase catalyzes the carboxylation of biotin on its carrier protein (BCCP) and then the CO(2) group is transferred by the carboxyltransferase to acetyl-CoA to form malonyl-CoA. This chain is Acetyl-coenzyme A carboxylase carboxyl transferase subunit alpha, found in Rhizobium leguminosarum bv. trifolii (strain WSM2304).